A 250-amino-acid chain; its full sequence is Probable fimbrial chaperone YfcS (250 aa).

Residues Met1 to Ala28 form the signal peptide.

It belongs to the periplasmic pilus chaperone family.

It localises to the periplasm. In terms of biological role, part of the yfcOPQRSUV fimbrial operon. Could contribute to adhesion to various surfaces in specific environmental niches. Increases adhesion to eukaryotic T24 bladder epithelial cells in the absence of fim genes. The polypeptide is Probable fimbrial chaperone YfcS (yfcS) (Escherichia coli (strain K12)).